Consider the following 84-residue polypeptide: METLLSFSAIAVGIIVGLASLGTAIGFALLGGKFLEGAARQPEMAPMLQVKMFIIAGLLDAVPMIGIVIALLFTFANPFVGQLG.

Transmembrane regions (helical) follow at residues 10–30 (IAVGIIVGLASLGTAIGFALL) and 53–73 (FIIAGLLDAVPMIGIVIALLF).

It belongs to the ATPase C chain family. F-type ATPases have 2 components, F(1) - the catalytic core - and F(0) - the membrane proton channel. F(1) has five subunits: alpha(3), beta(3), gamma(1), delta(1), epsilon(1). F(0) has three main subunits: a(1), b(2) and c(10-14). The alpha and beta chains form an alternating ring which encloses part of the gamma chain. F(1) is attached to F(0) by a central stalk formed by the gamma and epsilon chains, while a peripheral stalk is formed by the delta and b chains.

The protein localises to the cell inner membrane. Functionally, f(1)F(0) ATP synthase produces ATP from ADP in the presence of a proton or sodium gradient. F-type ATPases consist of two structural domains, F(1) containing the extramembraneous catalytic core and F(0) containing the membrane proton channel, linked together by a central stalk and a peripheral stalk. During catalysis, ATP synthesis in the catalytic domain of F(1) is coupled via a rotary mechanism of the central stalk subunits to proton translocation. Its function is as follows. Key component of the F(0) channel; it plays a direct role in translocation across the membrane. A homomeric c-ring of between 10-14 subunits forms the central stalk rotor element with the F(1) delta and epsilon subunits. This is ATP synthase subunit c from Vibrio alginolyticus.